Consider the following 1060-residue polypeptide: Anoctamin-8 (1060 aa).

Residues Met1–Ser32 form a disordered region. N-acetylalanine is present on Ala2. Residues Ala2 to Lys244 are Cytoplasmic-facing. Positions Glu14–Pro23 are enriched in basic and acidic residues. Residues Ile245–Phe265 traverse the membrane as a helical segment. The Extracellular segment spans residues Gly266 to Asp281. The helical transmembrane segment at Val282 to Trp302 threads the bilayer. At Lys303 to Gln356 the chain is on the cytoplasmic side. Residue Ser318 is modified to Phosphoserine. The helical transmembrane segment at Leu357 to Gly377 threads the bilayer. Topologically, residues Cys378–Lys400 are extracellular. The helical transmembrane segment at Val401–Leu421 threads the bilayer. The Cytoplasmic portion of the chain corresponds to Asn422–Leu437. A helical transmembrane segment spans residues Ile438–Phe458. The Extracellular portion of the chain corresponds to Tyr459–Glu745. Disordered regions lie at residues Ala529 to Asp605, Gly619 to Met640, Ala653 to Thr672, and Gly680 to Gln723. Gly residues predominate over residues Gly534–Gly547. 2 stretches are compositionally biased toward acidic residues: residues Pro549 to Ala559 and Glu581 to Ser602. Ser665 is modified (phosphoserine). Residues Gly680 to Glu694 are compositionally biased toward basic and acidic residues. N-linked (GlcNAc...) asparagine glycosylation is present at Asn708. A helical membrane pass occupies residues Met746 to Cys766. Residues Ala767–Lys802 lie on the Cytoplasmic side of the membrane. Ser796 is modified (phosphoserine). A helical membrane pass occupies residues Val803–Gly823. Topologically, residues Gln824–Ala836 are extracellular. Residues Ala837–Val857 traverse the membrane as a helical segment. Over Ala858–Pro1060 the chain is Cytoplasmic. The tract at residues His884–Pro1060 is disordered. Basic and acidic residues-rich tracts occupy residues Arg899–Ala927 and Val935–Arg950. The span at Thr972–Ser986 shows a compositional bias: pro residues. The residue at position 991 (Arg991) is an Asymmetric dimethylarginine; alternate. Arg991 carries the omega-N-methylarginine; alternate modification. Position 999 is an omega-N-methylarginine (Arg999). Residues Pro1049 to Pro1060 are compositionally biased toward basic and acidic residues.

The protein belongs to the anoctamin family. As to expression, predominant expression seen in epithelial tissues.

It is found in the cell membrane. Its function is as follows. Does not exhibit calcium-activated chloride channel (CaCC) activity. In Mus musculus (Mouse), this protein is Anoctamin-8 (Ano8).